Reading from the N-terminus, the 118-residue chain is MLDSIKQKKNSKRIKMRIKTGDLVKVINGKEKGKTGEVLKTIPLENRVVVKGINLRTKHVKPTQEGESGRILTEEASLHASNVMFFSKDKNIVSKIEFFIDKEGVKKRKLKKTGELID.

It belongs to the universal ribosomal protein uL24 family. Part of the 50S ribosomal subunit.

Functionally, one of two assembly initiator proteins, it binds directly to the 5'-end of the 23S rRNA, where it nucleates assembly of the 50S subunit. Its function is as follows. One of the proteins that surrounds the polypeptide exit tunnel on the outside of the subunit. This is Large ribosomal subunit protein uL24 from Prochlorococcus marinus (strain MIT 9515).